The sequence spans 572 residues: Proline--tRNA ligase (572 aa).

The protein belongs to the class-II aminoacyl-tRNA synthetase family. ProS type 1 subfamily. As to quaternary structure, homodimer.

The protein localises to the cytoplasm. The catalysed reaction is tRNA(Pro) + L-proline + ATP = L-prolyl-tRNA(Pro) + AMP + diphosphate. In terms of biological role, catalyzes the attachment of proline to tRNA(Pro) in a two-step reaction: proline is first activated by ATP to form Pro-AMP and then transferred to the acceptor end of tRNA(Pro). As ProRS can inadvertently accommodate and process non-cognate amino acids such as alanine and cysteine, to avoid such errors it has two additional distinct editing activities against alanine. One activity is designated as 'pretransfer' editing and involves the tRNA(Pro)-independent hydrolysis of activated Ala-AMP. The other activity is designated 'posttransfer' editing and involves deacylation of mischarged Ala-tRNA(Pro). The misacylated Cys-tRNA(Pro) is not edited by ProRS. In Pectobacterium carotovorum subsp. carotovorum (strain PC1), this protein is Proline--tRNA ligase.